The sequence spans 380 residues: uncharacterized protein (380 aa).

The N-terminal stretch at 1–28 (MQFLSDTQRMVLSRAVCASFFFFHVAVA) is a signal peptide. The SPOR domain maps to 307–380 (AGDEKPRGYQ…DAGYETFPLF (74 aa)).

This is an uncharacterized protein from Treponema pallidum (strain Nichols).